The primary structure comprises 78 residues: UPF0291 protein Exig_1097 (78 aa).

The interval 57–78 (EEGTDVTPEKLKQAQEEERNKQ) is disordered. The span at 63 to 78 (TPEKLKQAQEEERNKQ) shows a compositional bias: basic and acidic residues.

Belongs to the UPF0291 family.

It localises to the cytoplasm. The protein is UPF0291 protein Exig_1097 of Exiguobacterium sibiricum (strain DSM 17290 / CCUG 55495 / CIP 109462 / JCM 13490 / 255-15).